We begin with the raw amino-acid sequence, 143 residues long: Large ribosomal subunit protein uL15 (143 aa).

Composition is skewed to basic residues over residues Met1–Gly13 and Lys23–Gly38. Residues Met1–Gly38 are disordered.

It belongs to the universal ribosomal protein uL15 family. Part of the 50S ribosomal subunit.

Binds to the 23S rRNA. This Methanococcus maripaludis (strain C6 / ATCC BAA-1332) protein is Large ribosomal subunit protein uL15.